The sequence spans 473 residues: Photosystem II CP43 reaction center protein (473 aa).

A propeptide spanning residues 1–14 is cleaved from the precursor; sequence MKTLYSLRRFYPVE. At threonine 15 the chain carries N-acetylthreonine. Phosphothreonine is present on threonine 15. 5 helical membrane passes run 69–93, 134–155, 178–200, 255–275, and 291–312; these read LFEV…PHLA, LLGP…KDRN, KALY…RKIT, KPFA…LSYS, and WFNN…ASQA. [CaMn4O5] cluster is bound at residue glutamate 367. The helical transmembrane segment at 447 to 471 threads the bilayer; sequence RARAAAAGFEKGIDRDFEPVLSMTP.

This sequence belongs to the PsbB/PsbC family. PsbC subfamily. In terms of assembly, PSII is composed of 1 copy each of membrane proteins PsbA, PsbB, PsbC, PsbD, PsbE, PsbF, PsbH, PsbI, PsbJ, PsbK, PsbL, PsbM, PsbT, PsbX, PsbY, PsbZ, Psb30/Ycf12, at least 3 peripheral proteins of the oxygen-evolving complex and a large number of cofactors. It forms dimeric complexes. Binds multiple chlorophylls and provides some of the ligands for the Ca-4Mn-5O cluster of the oxygen-evolving complex. It may also provide a ligand for a Cl- that is required for oxygen evolution. PSII binds additional chlorophylls, carotenoids and specific lipids. serves as cofactor.

The protein localises to the plastid. The protein resides in the chloroplast thylakoid membrane. One of the components of the core complex of photosystem II (PSII). It binds chlorophyll and helps catalyze the primary light-induced photochemical processes of PSII. PSII is a light-driven water:plastoquinone oxidoreductase, using light energy to abstract electrons from H(2)O, generating O(2) and a proton gradient subsequently used for ATP formation. This Liriodendron tulipifera (Tuliptree) protein is Photosystem II CP43 reaction center protein.